We begin with the raw amino-acid sequence, 253 residues long: Oxidoreductase AOL_s00215g277 (253 aa).

A helical membrane pass occupies residues 181–203; that stretch reads FFGYWLTVILGYYIGSLLGYQPF.

Belongs to the oxidoreductase OpS7 family.

It is found in the membrane. It functions in the pathway secondary metabolite biosynthesis; terpenoid biosynthesis. Its function is as follows. Oxidoreductase; part of the gene cluster that mediates the biosynthesis of sesquiterpenyl epoxy-cyclohexenoids (SECs) such as anthrobotrisins and arthrosporols, metabolites that possess a novel hybrid carbon skeleton consisting of a polyketide-derived epoxycyclohexenol combined with a terpenoid-derived monocyclic sesquiterpenol substructure (PKS-PTS hybrid). The SEC pathway plays an important role for fungal soil colonization via decreasing fungal nematode-capturing ability. Within the pathway, the oxidoreductase AOL_s00215g277 seems to play a role in the farnesylation step of toluquinol to produce farnesyl hydroquinone, the hybrid precursor for biosynthesis of SECs. The pathway begins with the biosynthesis of 6-methylsalicylic acid (6-MSA), the first precursor of the polyketide-derived epoxycyclohexenol in arthrosporols, by the polyketide synthase (PKS) AOL_s00215g283 via condensation of 1 acetate and 3 malonate units. The 6-methylsalicylic acid decarboxylase AOL_s00215g281 then catalyzes the decarboxylation of 6-methylsalicylic acid to yield m-cresol. The cytochrome P450 monooxygenase AOL_s00215g282 further oxidizes m-cresol to yield toluquinol. With the assistance of the oxidoreductase AOL_s00215g277, the polyprenyl transferase AOL_s00215g276 catalyzes the farnesylation of toluquinol to produce farnesyl hydroquinone, the hybrid precursor for biosynthesis of SECs. Farnesyl hydroquinone undergoes epoxidation and then subsequent dehydrogenation to form farnesyl epoxy-quinone, the first and simplest SEC. The cytochrome P450 monooxygenase AOL_s00215g278 and the FAD-dependent monooxygenase AOL_s00215g279 might be involved in the oxygenation of the phenol moiety, most likely in the epoxy formation. The cytochrome P450 monooxygenases AOL_s00215g274 and AOL_s00215g280 are involved in specific regional ketone reductions at respectively C-4 and C-1 of farnesyl epoxy-quinone PubMed:33823587. This Arthrobotrys oligospora (strain ATCC 24927 / CBS 115.81 / DSM 1491) (Nematode-trapping fungus) protein is Oxidoreductase AOL_s00215g277.